We begin with the raw amino-acid sequence, 313 residues long: Porphobilinogen deaminase (313 aa).

Residue Cys-242 is modified to S-(dipyrrolylmethanemethyl)cysteine.

The protein belongs to the HMBS family. Monomer. It depends on dipyrromethane as a cofactor.

It carries out the reaction 4 porphobilinogen + H2O = hydroxymethylbilane + 4 NH4(+). It functions in the pathway porphyrin-containing compound metabolism; protoporphyrin-IX biosynthesis; coproporphyrinogen-III from 5-aminolevulinate: step 2/4. In terms of biological role, tetrapolymerization of the monopyrrole PBG into the hydroxymethylbilane pre-uroporphyrinogen in several discrete steps. In Pseudomonas fluorescens (strain Pf0-1), this protein is Porphobilinogen deaminase.